The primary structure comprises 265 residues: Glutamate racemase (265 aa).

Substrate is bound by residues 9–10 and 41–42; these read DS and YS. Cys-73 serves as the catalytic Proton donor/acceptor. Substrate is bound at residue 74–75; the sequence is NT. Cys-184 acts as the Proton donor/acceptor in catalysis. 185–186 is a substrate binding site; that stretch reads TH.

This sequence belongs to the aspartate/glutamate racemases family.

It catalyses the reaction L-glutamate = D-glutamate. Its pathway is cell wall biogenesis; peptidoglycan biosynthesis. Provides the (R)-glutamate required for cell wall biosynthesis. In Actinobacillus pleuropneumoniae serotype 5b (strain L20), this protein is Glutamate racemase.